An 843-amino-acid chain; its full sequence is Eisosome protein 1 (843 aa).

Residues 1-53 (MSLISAVEDRDIHNIGKTSGGGSRTSSITSSKKSLKHGSKSLRKPKVYQTTGE) form a disordered region. N-acetylserine is present on Ser2. Phosphoserine is present on Ser2. Over residues 33–46 (KSLKHGSKSLRKPK) the composition is skewed to basic residues. A phosphoserine mark is found at Ser88 and Ser130. The disordered stretch occupies residues 120–174 (KMGPKVVRNNSITSATSKTSKESQTKRKSKESPGAAASKAYSMTMETTSLSSQTN). Polar residues-rich tracts occupy residues 127–137 (RNNSITSATSK) and 163–174 (TMETTSLSSQTN). Ser182, Ser401, Ser584, and Ser710 each carry phosphoserine. Positions 717–843 (DLPTQLEKIE…QDAISNQEKK (127 aa)) are disordered. Thr720 is subject to Phosphothreonine. Residues 752 to 764 (STAAKEATETSSA) show a composition bias toward low complexity. Phosphoserine is present on residues Ser763 and Ser775. The span at 781-797 (SGKEDANDCKSAEHSKE) shows a compositional bias: basic and acidic residues. Over residues 798–810 (ISVSQKAGNNKSL) the composition is skewed to polar residues. Ser816, Ser828, Ser829, and Ser838 each carry phosphoserine.

The protein belongs to the EIS1 family.

The protein resides in the cytoplasmic granule. The protein localises to the cell membrane. Functionally, required for normal formation of eisosomes, large cytoplasmic protein assemblies that localize to specialized domains on plasma membrane and mark the site of endocytosis. The chain is Eisosome protein 1 (EIS1) from Saccharomyces cerevisiae (strain ATCC 204508 / S288c) (Baker's yeast).